The primary structure comprises 1040 residues: Myoblast growth factor receptor egl-15 (1040 aa).

An N-terminal signal peptide occupies residues 1–19 (MSYFLASCLGVGLLSTVSC). Topologically, residues 20-525 (SLQGLTSHYR…PKIDRWTTSD (506 aa)) are extracellular. The Ig-like C2-type 1 domain maps to 33–125 (PRFKHVANER…GQISRNFTVE (93 aa)). Cysteines 55 and 109 form a disulfide. Asn-121 carries N-linked (GlcNAc...) asparagine glycosylation. Over residues 234-257 (VHDSEESPSESRTEFINADEKENK) the composition is skewed to basic and acidic residues. The tract at residues 234–267 (VHDSEESPSESRTEFINADEKENKEDEEEDYSVS) is disordered. 2 N-linked (GlcNAc...) asparagine glycosylation sites follow: Asn-280 and Asn-299. Ig-like C2-type domains are found at residues 287–383 (PYFK…FHVI) and 391–501 (PPII…ATLT). Cys-314 and Cys-367 are oxidised to a cystine. Asn-401, Asn-407, Asn-433, Asn-440, Asn-449, Asn-474, and Asn-497 each carry an N-linked (GlcNAc...) asparagine glycan. Cys-414 and Cys-485 are oxidised to a cystine. Residues 526–549 (YIFTTILLFLLLAATLFGILFMVC) traverse the membrane as a helical segment. Topologically, residues 550–1040 (KQTLHKKGFM…NNNSMSKPEF (491 aa)) are cytoplasmic. One can recognise a Protein kinase domain in the interval 640 to 931 (LSLVHMLGEG…KTIVDYLDWM (292 aa)). ATP contacts are provided by residues 646–654 (LGEGAFGEV) and Lys-672. The active-site Proton acceptor is the Asp-797. Position 828 is a phosphotyrosine; by autocatalysis (Tyr-828). 2 disordered regions span residues 952-984 (ERSTASGPVSPMESFQKKRKHRPLSAPVNLPSE) and 1021-1040 (TPETSQRIPSNNNSMSKPEF). Residues 1022–1040 (PETSQRIPSNNNSMSKPEF) are compositionally biased toward polar residues.

Belongs to the protein kinase superfamily. Tyr protein kinase family. Fibroblast growth factor receptor subfamily. Requires Mg(2+) as cofactor. Activity is regulated by the phosphatase clr-1, however it is not known whether clr-1 acts directly on egl-15.

Its subcellular location is the membrane. It catalyses the reaction L-tyrosyl-[protein] + ATP = O-phospho-L-tyrosyl-[protein] + ADP + H(+). Receptor tyrosine kinase required for larval development. May phosphorylate adapter protein soc-1 which in turn may result in the recruitment and/or activation of phosphatase ptp-2. May activate the Ras/MAPK kinase signaling pathway which includes sem-5, sos-1, let-60/Ras, lin-45/Raf, mek-2 and mpk-1. Acts in the hypodermis to regulate axon growth and fluid homeostasis. Activates protein degradation in muscles. Probably following interaction with ligand let-756, negatively regulates membrane protrusion from body wall muscles during larval development. Plays a role in nicotinic acetylcholine receptor (nAChR)-mediated sensitivity to nicotine. Regulates synaptic levels of nAChR subunit lev-1 in the nerve cord. Its function is as follows. Affects the maintenance of axon position without affecting axon growth. Interaction with egl-17 is required for the guidance of sex myoblast migration during gonad development. Functionally, interaction with let-756 appears to play a role in maintaining body morphology at higher temperatures. The protein is Myoblast growth factor receptor egl-15 (egl-15) of Caenorhabditis elegans.